The chain runs to 291 residues: Light-independent protochlorophyllide reductase iron-sulfur ATP-binding protein (291 aa).

Residues 10 to 15 (GIGKST) and K39 each bind ATP. S14 serves as a coordination point for Mg(2+). [4Fe-4S] cluster contacts are provided by C95 and C129. 180 to 181 (NR) provides a ligand contact to ATP.

Belongs to the NifH/BchL/ChlL family. Homodimer. Protochlorophyllide reductase is composed of three subunits; ChlL, ChlN and ChlB. It depends on [4Fe-4S] cluster as a cofactor.

The protein resides in the plastid. The protein localises to the chloroplast. The enzyme catalyses chlorophyllide a + oxidized 2[4Fe-4S]-[ferredoxin] + 2 ADP + 2 phosphate = protochlorophyllide a + reduced 2[4Fe-4S]-[ferredoxin] + 2 ATP + 2 H2O. It functions in the pathway porphyrin-containing compound metabolism; chlorophyll biosynthesis (light-independent). Functionally, component of the dark-operative protochlorophyllide reductase (DPOR) that uses Mg-ATP and reduced ferredoxin to reduce ring D of protochlorophyllide (Pchlide) to form chlorophyllide a (Chlide). This reaction is light-independent. The L component serves as a unique electron donor to the NB-component of the complex, and binds Mg-ATP. In Pinus koraiensis (Korean pine), this protein is Light-independent protochlorophyllide reductase iron-sulfur ATP-binding protein.